The chain runs to 857 residues: DNA mismatch repair protein MutS (857 aa).

Position 603–610 (Gly603–Ser610) interacts with ATP.

Belongs to the DNA mismatch repair MutS family.

This protein is involved in the repair of mismatches in DNA. It is possible that it carries out the mismatch recognition step. This protein has a weak ATPase activity. The polypeptide is DNA mismatch repair protein MutS (Methanothrix thermoacetophila (strain DSM 6194 / JCM 14653 / NBRC 101360 / PT) (Methanosaeta thermophila)).